A 315-amino-acid polypeptide reads, in one-letter code: DNA-directed RNA polymerase subunit alpha (315 aa).

An alpha N-terminal domain (alpha-NTD) region spans residues 1 to 228; that stretch reads MLEIEKPKIE…EHFKLFMTLT (228 aa). Residues 245-315 form an alpha C-terminal domain (alpha-CTD) region; sequence KEKVLEMAIE…LGLSLKQNED (71 aa).

It belongs to the RNA polymerase alpha chain family. As to quaternary structure, homodimer. The RNAP catalytic core consists of 2 alpha, 1 beta, 1 beta' and 1 omega subunit. When a sigma factor is associated with the core the holoenzyme is formed, which can initiate transcription.

The catalysed reaction is RNA(n) + a ribonucleoside 5'-triphosphate = RNA(n+1) + diphosphate. DNA-dependent RNA polymerase catalyzes the transcription of DNA into RNA using the four ribonucleoside triphosphates as substrates. This Clostridium kluyveri (strain NBRC 12016) protein is DNA-directed RNA polymerase subunit alpha.